Here is a 376-residue protein sequence, read N- to C-terminus: Alcohol dehydrogenase class-3 (376 aa).

Positions 40, 62, 92, 95, 98, 106, and 170 each coordinate Zn(2+).

Belongs to the zinc-containing alcohol dehydrogenase family. Class-III subfamily. In terms of assembly, homodimer. The cofactor is Zn(2+).

It localises to the cytoplasm. The enzyme catalyses a primary alcohol + NAD(+) = an aldehyde + NADH + H(+). It carries out the reaction a secondary alcohol + NAD(+) = a ketone + NADH + H(+). The catalysed reaction is S-(hydroxymethyl)glutathione + NADP(+) = S-formylglutathione + NADPH + H(+). It catalyses the reaction S-(hydroxymethyl)glutathione + NAD(+) = S-formylglutathione + NADH + H(+). Oxidizes long-chain aliphatic alcohols, long-chain hydroxylated fatty acids and S-hydroxymethylglutathione (hmGSH) in increasing order of preference. Shows little or no activity with short-chain aliphatic alcohols. This is Alcohol dehydrogenase class-3 (adhI) from Cereibacter sphaeroides (strain ATCC 17023 / DSM 158 / JCM 6121 / CCUG 31486 / LMG 2827 / NBRC 12203 / NCIMB 8253 / ATH 2.4.1.) (Rhodobacter sphaeroides).